Reading from the N-terminus, the 353-residue chain is MSEPLKPRIDFAEPLKEEPTSAFKAQQTFSEAESRTFAPAAIDERPEDEGVAEAAVDAALRPKRSLWRKMVMGGLALFGASVVGQGVQWTMNAWQTQDWVALGGCAAGALIVGAGVGSVVTEWRRLWRLRQRAHERDEARELLHSHSVGKGRAFCEKLAQQAGIDQSHPALQRWYAAIHETQNDREIVGLYAHLVQPVLDAQARREISRFAAESTLMIAVSPLALVDMAFIAWRNLRLINRIATLYGIELGYYSRLRLFRLVLLNIAFAGASELMREVGMDWMSQDLAARLSTRAAQGIGAGLLTARLGIKAMELCRPLPWIDNDKPRLGDFRRQLIGQLKETLQKSKSSPEK.

Residues 1–19 (MSEPLKPRIDFAEPLKEEP) show a composition bias toward basic and acidic residues. Positions 1–35 (MSEPLKPRIDFAEPLKEEPTSAFKAQQTFSEAESR) are disordered. 3 helical membrane-spanning segments follow: residues 70–90 (MVMGGLALFGASVVGQGVQWT), 100–120 (VALGGCAAGALIVGAGVGSVV), and 213–233 (ESTLMIAVSPLALVDMAFIAW).

The protein belongs to the UPF0283 family.

It localises to the cell inner membrane. This Salmonella paratyphi B (strain ATCC BAA-1250 / SPB7) protein is UPF0283 membrane protein YcjF.